A 133-amino-acid polypeptide reads, in one-letter code: Nickel-responsive regulator (133 aa).

Positions 76, 87, 89, and 95 each coordinate Ni(2+).

This sequence belongs to the transcriptional regulatory CopG/NikR family. Homotetramer. Ni(2+) is required as a cofactor.

In terms of biological role, transcriptional repressor of the nikABCDE operon. Is active in the presence of excessive concentrations of intracellular nickel. The polypeptide is Nickel-responsive regulator (Salmonella choleraesuis (strain SC-B67)).